The primary structure comprises 422 residues: Phosphoglycerate kinase (422 aa).

Substrate contacts are provided by residues 24–26, 64–67, Arg-129, and Arg-171; these read DLN and HLGR. Residues Lys-222, Gly-309, Glu-340, and 370-373 each bind ATP; that span reads DIDT.

The protein belongs to the phosphoglycerate kinase family. In terms of assembly, monomer.

It is found in the cytoplasm. The enzyme catalyses (2R)-3-phosphoglycerate + ATP = (2R)-3-phospho-glyceroyl phosphate + ADP. It participates in carbohydrate degradation; glycolysis; pyruvate from D-glyceraldehyde 3-phosphate: step 2/5. This Ureaplasma parvum serovar 3 (strain ATCC 700970) protein is Phosphoglycerate kinase (pgk).